Reading from the N-terminus, the 277-residue chain is uncharacterized protein (277 aa).

Solcar repeat units follow at residues 1 to 84, 96 to 179, and 184 to 268; these read MDQA…SKRV, ISVL…LKLW, and PTSL…VGMH. Transmembrane regions (helical) follow at residues 3 to 24, 60 to 80, 102 to 122, 152 to 172, 190 to 210, and 240 to 261; these read QAIA…LDLA, LSIN…IYDF, LCSS…IWVV, CYAG…QFMA, IFMS…LLVI, and FYKG…TFLV.

This sequence belongs to the mitochondrial carrier (TC 2.A.29) family.

The protein localises to the mitochondrion inner membrane. This is an uncharacterized protein from Schizosaccharomyces pombe (strain 972 / ATCC 24843) (Fission yeast).